Here is a 516-residue protein sequence, read N- to C-terminus: Maintenance of mitochondrial morphology protein 1 (516 aa).

Residues 1 to 43 (MAGSTSASLQTPYFPSSTQINPVRVDHTLPLPPAQPSLSFTQG) are Lumenal-facing. A helical membrane pass occupies residues 44-64 (LLVGQLSVVLLIGAFIKFFIF). Residues 65–516 (GEAPPPPSRG…GSMPDTVTET (452 aa)) are Cytoplasmic-facing. Disordered regions lie at residues 70-118 (PPSR…SSST), 295-349 (TSDQ…SKHG), 420-466 (RTGL…IDRG), and 485-516 (GGHQ…VTET). 3 stretches are compositionally biased toward polar residues: residues 74–96 (GLSN…TDSS), 105–118 (STSN…SSST), and 295–312 (TSDQ…TTSE). One can recognise an SMP-LTD domain in the interval 151-412 (QPESLDWFNV…EPRVQVVGLP (262 aa)). A compositionally biased stretch (gly residues) spans 449–460 (GVSGGGGGGGSM).

The protein belongs to the MMM1 family. Homodimer. Component of the ER-mitochondria encounter structure (ERMES) or MDM complex, composed of MMM1, MDM10, MDM12 and MDM34. An MMM1 homodimer associates with one molecule of MDM12 on each side in a pairwise head-to-tail manner, and the SMP-LTD domains of MMM1 and MDM12 generate a continuous hydrophobic tunnel for phospholipid trafficking.

Its subcellular location is the endoplasmic reticulum membrane. Functionally, component of the ERMES/MDM complex, which serves as a molecular tether to connect the endoplasmic reticulum (ER) and mitochondria. Components of this complex are involved in the control of mitochondrial shape and protein biogenesis, and function in nonvesicular lipid trafficking between the ER and mitochondria. The MDM12-MMM1 subcomplex functions in the major beta-barrel assembly pathway that is responsible for biogenesis of all outer membrane beta-barrel proteins, and acts in a late step after the SAM complex. The MDM10-MDM12-MMM1 subcomplex further acts in the TOM40-specific pathway after the action of the MDM12-MMM1 complex. Essential for establishing and maintaining the structure of mitochondria and maintenance of mtDNA nucleoids. This Paracoccidioides brasiliensis (strain Pb18) protein is Maintenance of mitochondrial morphology protein 1.